The chain runs to 303 residues: UDP-3-O-acyl-N-acetylglucosamine deacetylase (303 aa).

Residues His78, His237, and Asp241 each contribute to the Zn(2+) site. Residue His264 is the Proton donor of the active site.

The protein belongs to the LpxC family. Requires Zn(2+) as cofactor.

The enzyme catalyses a UDP-3-O-[(3R)-3-hydroxyacyl]-N-acetyl-alpha-D-glucosamine + H2O = a UDP-3-O-[(3R)-3-hydroxyacyl]-alpha-D-glucosamine + acetate. Its pathway is glycolipid biosynthesis; lipid IV(A) biosynthesis; lipid IV(A) from (3R)-3-hydroxytetradecanoyl-[acyl-carrier-protein] and UDP-N-acetyl-alpha-D-glucosamine: step 2/6. Functionally, catalyzes the hydrolysis of UDP-3-O-myristoyl-N-acetylglucosamine to form UDP-3-O-myristoylglucosamine and acetate, the committed step in lipid A biosynthesis. This Stenotrophomonas maltophilia (strain R551-3) protein is UDP-3-O-acyl-N-acetylglucosamine deacetylase.